Consider the following 201-residue polypeptide: MTMTRLKISKTLLAVMLTSAVATGSAYAENNAQTTNESAGQKVDSSMNKVGNFMDDSAITAKVKAALVDHDNIKSTDISVKTDQKVVTLSGFVESQAQAEEAVKVAKGVEGVTSVSDKLHVRDAKEGSVKGYAGDTATTSEIKAKLLADDIVPSRHVKVETTDGVVQLSGTVDSQAQSDRAESIAKAVDGVKSVKNDLKTK.

The N-terminal stretch at 1–28 is a signal peptide; the sequence is MTMTRLKISKTLLAVMLTSAVATGSAYA. BON domains lie at 55–123 and 134–201; these read DDSA…HVRD and GDTA…LKTK.

The protein resides in the periplasm. This chain is Osmotically-inducible protein Y (osmY), found in Escherichia coli (strain K12).